A 195-amino-acid chain; its full sequence is ATP-dependent Clp protease proteolytic subunit 2 (195 aa).

The active-site Nucleophile is Ser-92. Residue His-117 is part of the active site.

Belongs to the peptidase S14 family. Fourteen ClpP subunits assemble into 2 heptameric rings which stack back to back to give a disk-like structure with a central cavity, resembling the structure of eukaryotic proteasomes.

It localises to the cytoplasm. The enzyme catalyses Hydrolysis of proteins to small peptides in the presence of ATP and magnesium. alpha-casein is the usual test substrate. In the absence of ATP, only oligopeptides shorter than five residues are hydrolyzed (such as succinyl-Leu-Tyr-|-NHMec, and Leu-Tyr-Leu-|-Tyr-Trp, in which cleavage of the -Tyr-|-Leu- and -Tyr-|-Trp bonds also occurs).. In terms of biological role, cleaves peptides in various proteins in a process that requires ATP hydrolysis. Has a chymotrypsin-like activity. Plays a major role in the degradation of misfolded proteins. The protein is ATP-dependent Clp protease proteolytic subunit 2 of Rhodococcus jostii (strain RHA1).